The following is a 345-amino-acid chain: MRLSDFDFALPEGLVAQAPVTPRDASRLMVLAPGEGAPAHRGFADLPELLAPGDLLVFNDTRVIPARLLGHKASGGKVELLLCEPLEGGLGRRWRAMGQASKPIREGAVLAFDGLEARVDAVEGEGFYRVTLDRQGAELEAALGRAGRIPLPPYIRRAPDAEDAARYQTIWARAPGSAAAPTAGLHFTEPLLARLAARGVRRTAVTLHVGPGTFLPIRGDDLDAHRMHGERYEVSPAAAAELAAARARGGRIVAVGTTSVRTLESAWRDGEVAPGPGRTELFIRPGHPFRAVDAMVTNFHLPRSTLLVLVCAFGGQGRVLAAYREAVARGYRFFSYGDAMLLLRR.

It belongs to the QueA family. In terms of assembly, monomer.

The protein resides in the cytoplasm. It carries out the reaction 7-aminomethyl-7-carbaguanosine(34) in tRNA + S-adenosyl-L-methionine = epoxyqueuosine(34) in tRNA + adenine + L-methionine + 2 H(+). It functions in the pathway tRNA modification; tRNA-queuosine biosynthesis. Functionally, transfers and isomerizes the ribose moiety from AdoMet to the 7-aminomethyl group of 7-deazaguanine (preQ1-tRNA) to give epoxyqueuosine (oQ-tRNA). In Anaeromyxobacter dehalogenans (strain 2CP-C), this protein is S-adenosylmethionine:tRNA ribosyltransferase-isomerase.